A 492-amino-acid polypeptide reads, in one-letter code: Monocarboxylate transporter 3 (492 aa).

Residues 1 to 14 lie on the Cytoplasmic side of the membrane; it reads MGAGGPRRGAGPPD. A helical membrane pass occupies residues 15 to 35; the sequence is GGWGWVVLGACFVVTGFAYGF. Topologically, residues 36–58 are extracellular; it reads PKAVSVFFRELKRDFGAGYSDTA. Residues 59–79 traverse the membrane as a helical segment; it reads WVSSIMLAMLYGTGPLSSILV. Residues 80 to 85 lie on the Cytoplasmic side of the membrane; sequence TRFGCR. A helical membrane pass occupies residues 86 to 106; that stretch reads PVMLAGGLLASAGMILASFAS. Residues 107–115 lie on the Extracellular side of the membrane; sequence RLVELYLTA. Residues 116 to 136 form a helical membrane-spanning segment; sequence GVLTGLGLALNFQPSLIMLGL. Topologically, residues 137–146 are cytoplasmic; the sequence is YFERRRPLAN. A helical transmembrane segment spans residues 147-167; that stretch reads GLAAAGSPVFLSMLSPLGQLL. Topologically, residues 168–172 are extracellular; the sequence is GERFG. A helical transmembrane segment spans residues 173–193; it reads WRGGFLLFGGLLLHCCACGAV. The Cytoplasmic portion of the chain corresponds to 194–228; that stretch reads MRPPPGPPPRRDPSPHGGPARRRRLLDVAVCTDRA. The helical transmembrane segment at 229–249 threads the bilayer; sequence FVVYVVTKFLMALGLFVPAIL. Residues 250 to 257 are Extracellular-facing; the sequence is LVNYAKDA. The helical transmembrane segment at 258-278 threads the bilayer; the sequence is GVPDAEAAFLLSIVGFVDIVA. The Cytoplasmic portion of the chain corresponds to 279 to 293; that stretch reads RPACGALAGLGRLRP. The helical transmembrane segment at 294 to 314 threads the bilayer; sequence HVPYLFSLALLANGLTDLISA. Residues 315–318 are Extracellular-facing; that stretch reads RARS. A helical transmembrane segment spans residues 319-339; the sequence is YGTLVAFCIAFGLSYGMVGAL. Topologically, residues 340–352 are cytoplasmic; sequence QFEVLMATVGAPR. Residues 353-373 form a helical membrane-spanning segment; that stretch reads FPSALGLVLLVEAVAVLIGPP. The Extracellular portion of the chain corresponds to 374–386; it reads SAGRLVDALKNYE. Residues 387 to 407 traverse the membrane as a helical segment; sequence IIFYLAGSEVALAGVFMAVTT. Residues 408 to 492 lie on the Cytoplasmic side of the membrane; sequence YCCLRCSKNI…GGHEARGQKA (85 aa). Positions 419 to 492 are disordered; it reads SGRSAEGGAS…GGHEARGQKA (74 aa). 2 basolateral sorting signal regions span residues 426–460 and 461–482; these read GASD…VLSP and RAGS…HESI. Positions 476–492 are enriched in basic and acidic residues; the sequence is ELDHESIGGHEARGQKA.

This sequence belongs to the major facilitator superfamily. Monocarboxylate porter (TC 2.A.1.13) family. As to expression, expressed exclusively in retinal pigment epithelium and choroid plexus epithelium.

It is found in the basolateral cell membrane. It carries out the reaction (S)-lactate(in) + H(+)(in) = (S)-lactate(out) + H(+)(out). Its function is as follows. Probable retinal pigment epithelium (RPE)-specific proton-coupled L-lactate transporter. May facilitate transport of lactate and H(+) out of the retina and could therefore play an essential role in maintenance of metabolic and ionic homeostasis of the outer retina. This Mus musculus (Mouse) protein is Monocarboxylate transporter 3 (Slc16a8).